A 259-amino-acid chain; its full sequence is Adenosylcobinamide-GDP ribazoletransferase (259 aa).

A run of 7 helical transmembrane segments spans residues 41-61, 67-87, 119-139, 148-168, 179-199, 200-220, and 237-257; these read AAIW…AIVF, FGLA…IATG, IGAY…NVLS, LFAL…FMHL, AGAG…GAIP, LLLL…LLFA, and TIGA…SVAL.

Belongs to the CobS family. Mg(2+) is required as a cofactor.

Its subcellular location is the cell inner membrane. It carries out the reaction alpha-ribazole + adenosylcob(III)inamide-GDP = adenosylcob(III)alamin + GMP + H(+). The catalysed reaction is alpha-ribazole 5'-phosphate + adenosylcob(III)inamide-GDP = adenosylcob(III)alamin 5'-phosphate + GMP + H(+). Its pathway is cofactor biosynthesis; adenosylcobalamin biosynthesis; adenosylcobalamin from cob(II)yrinate a,c-diamide: step 7/7. In terms of biological role, joins adenosylcobinamide-GDP and alpha-ribazole to generate adenosylcobalamin (Ado-cobalamin). Also synthesizes adenosylcobalamin 5'-phosphate from adenosylcobinamide-GDP and alpha-ribazole 5'-phosphate. The protein is Adenosylcobinamide-GDP ribazoletransferase of Mesorhizobium japonicum (strain LMG 29417 / CECT 9101 / MAFF 303099) (Mesorhizobium loti (strain MAFF 303099)).